The following is a 325-amino-acid chain: Glutarate 2-hydroxylase (325 aa).

Positions 160, 162, and 292 each coordinate Fe cation.

It belongs to the glutarate hydroxylase family. As to quaternary structure, homotetramer. It depends on Fe(2+) as a cofactor.

The catalysed reaction is glutarate + 2-oxoglutarate + O2 = (S)-2-hydroxyglutarate + succinate + CO2. The protein operates within amino-acid degradation. Functionally, acts as an alpha-ketoglutarate-dependent dioxygenase catalyzing hydroxylation of glutarate (GA) to L-2-hydroxyglutarate (L2HG). Functions in a L-lysine degradation pathway that proceeds via cadaverine, glutarate and L-2-hydroxyglutarate. This Escherichia fergusonii (strain ATCC 35469 / DSM 13698 / CCUG 18766 / IAM 14443 / JCM 21226 / LMG 7866 / NBRC 102419 / NCTC 12128 / CDC 0568-73) protein is Glutarate 2-hydroxylase.